The sequence spans 79 residues: MSVIINYDKLLKRIRHKYAIPIAAARRAEGLKDFGRPKLDPQMVKQAGDKINIALKELEEGRIVIRNEEMLKILVPKVK.

This sequence belongs to the RNA polymerase subunit omega family. As to quaternary structure, the RNAP catalytic core consists of 2 alpha, 1 beta, 1 beta' and 1 omega subunit. When a sigma factor is associated with the core the holoenzyme is formed, which can initiate transcription.

It carries out the reaction RNA(n) + a ribonucleoside 5'-triphosphate = RNA(n+1) + diphosphate. Promotes RNA polymerase assembly. Latches the N- and C-terminal regions of the beta' subunit thereby facilitating its interaction with the beta and alpha subunits. This chain is DNA-directed RNA polymerase subunit omega, found in Kosmotoga olearia (strain ATCC BAA-1733 / DSM 21960 / TBF 19.5.1).